Consider the following 349-residue polypeptide: Phosphoribosylformylglycinamidine cyclo-ligase (349 aa).

It belongs to the AIR synthase family.

The protein resides in the cytoplasm. The enzyme catalyses 2-formamido-N(1)-(5-O-phospho-beta-D-ribosyl)acetamidine + ATP = 5-amino-1-(5-phospho-beta-D-ribosyl)imidazole + ADP + phosphate + H(+). It participates in purine metabolism; IMP biosynthesis via de novo pathway; 5-amino-1-(5-phospho-D-ribosyl)imidazole from N(2)-formyl-N(1)-(5-phospho-D-ribosyl)glycinamide: step 2/2. This chain is Phosphoribosylformylglycinamidine cyclo-ligase, found in Bordetella parapertussis (strain 12822 / ATCC BAA-587 / NCTC 13253).